The following is a 517-amino-acid chain: Putative transporter C543.05c (517 aa).

A run of 11 helical transmembrane segments spans residues 68–88 (SFGVNEVLLASVLGSVVFALL), 93–113 (LCIVGVTGPITVFNYTVYDIM), 121–141 (FPFLCWICLWSMIFHFIIAIA), 155–175 (CEIFGLYVAFIYLEKGVQVLC), 186–206 (FLSITIALLFLMVGWLCDTVG), 217–237 (ILLLDYGLVASIIFFSGFQHI), 269–289 (IPVGDVFLAIPFSIVLTILFY), 311–331 (GFHWDFFLLGITTGVSGILGI), 377–397 (SNFIQGLMTVGTMTGPLLLVL), 403–423 (CVLAGLFWVMGFSAIFGNGIT), and 449–471 (RVVWLYTILQLIGFGATFAITQV).

Belongs to the anion exchanger (TC 2.A.31) family.

It localises to the vacuole membrane. The polypeptide is Putative transporter C543.05c (Schizosaccharomyces pombe (strain 972 / ATCC 24843) (Fission yeast)).